Here is a 1169-residue protein sequence, read N- to C-terminus: ATP-dependent helicase/deoxyribonuclease subunit B (1169 aa).

The UvrD-like helicase ATP-binding domain maps to 1–285 (MEIQFLAGRS…TIFERNHRHL (285 aa)). 8-15 (GRSGSGKT) is an ATP binding site. The UvrD-like helicase C-terminal domain maps to 280 to 586 (RNHRHLYTPD…KFALIPPSLD (307 aa)). Residues C801, C1121, C1124, and C1130 each contribute to the [4Fe-4S] cluster site.

This sequence belongs to the helicase family. AddB/RexB type 1 subfamily. In terms of assembly, heterodimer of AddA and AddB. Mg(2+) serves as cofactor. Requires [4Fe-4S] cluster as cofactor.

Functionally, the heterodimer acts as both an ATP-dependent DNA helicase and an ATP-dependent, dual-direction single-stranded exonuclease. Recognizes the chi site generating a DNA molecule suitable for the initiation of homologous recombination. The AddB subunit has 5' -&gt; 3' nuclease activity but not helicase activity. The protein is ATP-dependent helicase/deoxyribonuclease subunit B of Bacillus pumilus (strain SAFR-032).